We begin with the raw amino-acid sequence, 578 residues long: Paraneoplastic antigen Ma6F (578 aa).

Disordered regions lie at residues Ala106–Ala221 and Ala441–Lys578. Positions Ala112–Val129 are enriched in low complexity. Residues Gly147–Gly159 show a composition bias toward gly residues. Over residues Ala160–Ala173 the composition is skewed to low complexity. The span at Gly174–Glu211 shows a compositional bias: gly residues. Residues Pro449–Ala461 show a composition bias toward low complexity. Acidic residues-rich tracts occupy residues Ser462–Glu473 and Glu556–Ala566.

The chain is Paraneoplastic antigen Ma6F from Homo sapiens (Human).